The sequence spans 321 residues: uncharacterized protein (321 aa).

Residues 1–12 are compositionally biased toward basic residues; sequence MSMFLKKQKKTK. Disordered stretches follow at residues 1–59 and 71–289; these read MSMF…MRKT and EDCT…GPED. The segment covering 50-59 has biased composition (basic and acidic residues); sequence DGIKETMRKT. The segment covering 99–115 has biased composition (acidic residues); it reads DDSDSESSEDGGEDDEE. The span at 156–175 shows a compositional bias: low complexity; the sequence is SDSSSSSSSSSDSESSSSSD. A compositionally biased stretch (basic and acidic residues) spans 179 to 189; that stretch reads DGDRSTPEPDI. The segment covering 231–242 has biased composition (low complexity); that stretch reads EPSPLRAAAAAA.

This is an uncharacterized protein from Equus caballus (Horse).